Here is a 37-residue protein sequence, read N- to C-terminus: Large ribosomal subunit protein bL36 (37 aa).

It belongs to the bacterial ribosomal protein bL36 family.

This Clostridium kluyveri (strain NBRC 12016) protein is Large ribosomal subunit protein bL36.